A 335-amino-acid polypeptide reads, in one-letter code: 2-acylglycerol O-acyltransferase 1 (335 aa).

Helical transmembrane passes span 24–44 and 104–124; these read WVLS…MLVL and YIFG…NFCT. The N-linked (GlcNAc...) asparagine glycan is linked to Asn180.

This sequence belongs to the diacylglycerol acyltransferase family. As to expression, expressed at high level in kidney and stomach. Expressed at lower level in brown and white adipose tissue, uterus and liver. Not detected in small intestine.

It is found in the endoplasmic reticulum membrane. The catalysed reaction is a 2-acylglycerol + an acyl-CoA = a 1,2-diacylglycerol + CoA. The enzyme catalyses 2-(9Z-octadecenoyl)-glycerol + butanoyl-CoA = 1-butanoyl-2-(9Z-octadecenoyl)-glycerol + CoA. It carries out the reaction 2-(9Z-octadecenoyl)-glycerol + octanoyl-CoA = 1-octanoyl-2-(9Z-octadecenoyl)-glycerol + CoA. It catalyses the reaction 2-(9Z-octadecenoyl)-glycerol + dodecanoyl-CoA = 1-dodecanoyl-2-(9Z-octadecenoyl)-glycerol + CoA. The catalysed reaction is 2-(9Z-octadecenoyl)-glycerol + tetradecanoyl-CoA = 1-tetradecanoyl-2-(9Z-octadecenoyl)-glycerol + CoA. The enzyme catalyses 2-(9Z-octadecenoyl)-glycerol + hexadecanoyl-CoA = 1-hexadecanoyl-2-(9Z-octadecenoyl)-glycerol + CoA. It carries out the reaction 2-(9Z-octadecenoyl)-glycerol + octadecanoyl-CoA = 1-octadecanoyl-2-(9Z-octadecenoyl)-glycerol + CoA. It catalyses the reaction eicosanoyl-CoA + 2-(9Z-octadecenoyl)-glycerol = 1-eicosanoyl-2-(9Z-octadecenoyl)-glycerol + CoA. The catalysed reaction is 2-(9Z-octadecenoyl)-glycerol + (9Z)-octadecenoyl-CoA = 1,2-di-(9Z-octadecenoyl)-glycerol + CoA. The enzyme catalyses 2-(9Z-octadecenoyl)-glycerol + (9Z,12Z)-octadecadienoyl-CoA = 1-(9Z,12Z-octadecadienoyl)-2-(9Z-octadecenoyl)-glycerol + CoA. It carries out the reaction 2-(9Z-octadecenoyl)-glycerol + (5Z,8Z,11Z,14Z)-eicosatetraenoyl-CoA = 1-(5Z,8Z,11Z,14Z-eicosatetraenoyl)-2-(9Z-octadecenoyl)-glycerol + CoA. It catalyses the reaction a 2-acylglycerol + an acyl-CoA = a 1,2-diacyl-sn-glycerol + CoA. The catalysed reaction is a 2-acylglycerol + an acyl-CoA = a 2,3-diacyl-sn-glycerol + CoA. The enzyme catalyses a 1-acylglycerol + an acyl-CoA = a 1,2-diacylglycerol + CoA. It carries out the reaction 1-dodecanoylglycerol + (9Z)-octadecenoyl-CoA = 1-dodecanoyl-2-(9Z-octadecenoyl)-glycerol + CoA. It catalyses the reaction 1-tetradecanoylglycerol + (9Z)-octadecenoyl-CoA = 1-tetradecanoyl-2-(9Z-octadecenoyl)-glycerol + CoA. The catalysed reaction is 1-hexadecanoylglycerol + (9Z)-octadecenoyl-CoA = 1-hexadecanoyl-2-(9Z-octadecenoyl)-glycerol + CoA. The enzyme catalyses 1-(9Z-octadecenoyl)-glycerol + (9Z)-octadecenoyl-CoA = 1,2-di-(9Z-octadecenoyl)-glycerol + CoA. It carries out the reaction 1-(9Z,12Z-octadecadienoyl)-glycerol + (9Z)-octadecenoyl-CoA = 1-(9Z,12Z-octadecadienoyl)-2-(9Z-octadecenoyl)-glycerol + CoA. It catalyses the reaction 1-(9Z,12Z,15Z-octadecatrienoyl)-glycerol + (9Z)-octadecenoyl-CoA = 1-(9Z,12Z,15Z-octadecatrienoyl)-2-(9Z-octadecenoyl)-glycerol + CoA. The catalysed reaction is 1-(5Z,8Z,11Z,14Z-eicosatetraenoyl)-glycerol + (9Z)-octadecenoyl-CoA = 1-(5Z,8Z,11Z,14Z-eicosatetraenoyl)-2-(9Z-octadecenoyl)-glycerol + CoA. The enzyme catalyses a 1-acylglycerol + an acyl-CoA = a 1,3-diacylglycerol + CoA. It carries out the reaction 1-dodecanoylglycerol + (9Z)-octadecenoyl-CoA = 1-dodecanoyl-3-(9Z-octadecenoyl)-glycerol + CoA. It catalyses the reaction 1-hexadecanoylglycerol + (9Z)-octadecenoyl-CoA = 1-(9Z-octadecenoyl)-3-hexadecanoylglycerol + CoA. The catalysed reaction is 1-octadecanoylglycerol + (9Z)-octadecenoyl-CoA = 1-octadecanoyl-3-(9Z-octadecenoyl)-glycerol + CoA. The enzyme catalyses 1-(9Z-octadecenoyl)-sn-glycerol + (9Z)-octadecenoyl-CoA = 1,3-di-(9Z-octadecenoyl)-glycerol + CoA. It carries out the reaction 1-(9Z,12Z-octadecadienoyl)-glycerol + (9Z)-octadecenoyl-CoA = 1-(9Z-octadecenoyl)-3-(9Z,12Z-octadecadienoyl)-glycerol + CoA. It catalyses the reaction 1-(9Z,12Z,15Z-octadecatrienoyl)-glycerol + (9Z)-octadecenoyl-CoA = 1-(9Z,12Z,15Z-octadecatrienoyl)-3-(9Z-octadecenoyl)-glycerol + CoA. The catalysed reaction is a 1-acyl-sn-glycerol + an acyl-CoA = a 1,3-diacyl-sn-glycerol + CoA. The enzyme catalyses a 3-acyl-sn-glycerol + an acyl-CoA = a 1,3-diacyl-sn-glycerol + CoA. It carries out the reaction 3-octadecanoyl-sn-glycerol + (9Z)-octadecenoyl-CoA = 1-(9Z-octadecenoyl)-3-octadecanoyl-sn-glycerol + CoA. The protein operates within glycerolipid metabolism; triacylglycerol biosynthesis. Involved in glycerolipid synthesis and lipid metabolism. Catalyzes the formation of diacylglycerol, the precursor of triacylglycerol, by transferring the acyl chain of a fatty acyl-CoA to a monoacylglycerol, mainly at the sn-1 or sn-3 positions. It uses both sn-2-monoacylglycerol (2-acylglycerol) and sn-1-monoacylglycerol (1-acyl-sn-glycerol) equally well as substrates, and uses sn-3-monoacylglycerol (3-acyl-sn-glycerol) with lower efficiency. Probably not involved in absorption of dietary fat in the small intestine. This is 2-acylglycerol O-acyltransferase 1 from Mus musculus (Mouse).